The primary structure comprises 403 residues: CinA-like protein (403 aa).

This sequence belongs to the CinA family.

The protein is CinA-like protein of Petrotoga mobilis (strain DSM 10674 / SJ95).